Here is a 514-residue protein sequence, read N- to C-terminus: Sugar transport protein 10 (514 aa).

At 1–18 (MAGGAFVSEGGGGGRSYE) the chain is on the cytoplasmic side. 10 helical membrane-spanning segments follow: residues 19–39 (GGVT…GLLF), 86–106 (LFTS…SVIT), 113–133 (VSMF…AFAV), 135–155 (VSML…ANQS), 170–190 (GALN…ANLI), 204–224 (VSLG…FILP), 285–305 (LIFC…VIMF), 320–340 (AALM…FVSI), 350–370 (LLFL…GSFI), and 389–409 (WILA…GPLG). Cys-77 and Cys-449 are disulfide-bonded. Gln-177 contacts beta-D-glucose. Gln-295, Gln-296, Asn-301, and Asn-332 together coordinate beta-D-glucose. Trp-410 is a binding site for beta-D-glucose. The next 2 membrane-spanning stretches (helical) occupy residues 428-448 (INVS…LTML) and 453-473 (FGLF…IYFL). At 474 to 514 (LPETKGVPIEEMGRVWKQHWFWKKYIPEDAIIGGHDDNNTN) the chain is on the cytoplasmic side.

This sequence belongs to the major facilitator superfamily. Sugar transporter (TC 2.A.1.1) family. Expressed in primordia of lateral roots, pollinated stigmata, and pollen tubes.

It localises to the membrane. The enzyme catalyses D-glucose(out) + H(+)(out) = D-glucose(in) + H(+)(in). It catalyses the reaction D-mannose(out) + H(+)(out) = D-mannose(in) + H(+)(in). It carries out the reaction D-galactose(in) + H(+)(in) = D-galactose(out) + H(+)(out). Hexose-H(+) symporter that catalyzes the high-affinity uptake of glucose, galactose and mannose. Proton-coupled symporter responsible for the uptake of glucose from the apoplast into the cells. The protein is Sugar transport protein 10 of Arabidopsis thaliana (Mouse-ear cress).